Here is a 265-residue protein sequence, read N- to C-terminus: MTDLTACAHLNDYAKRALSLMDLTTLNDDDTDEKVIALCHQAKSPAGNTAAICIYPRFIPVARKALREQGTPEIRIATVTNFPHGNDDVAIALAETRAAIAYGADEVDVVFPYRALMAGNDKIGFELVKTCKEACAAANVLLKVIIETGELKQAHLIRQASEIAIKAGADFIKTSTGKVPVNATLESADIMIRTIRELGVGETVGFKPAGGVRTAEDAAQFLQLADQLMGEGWADARHFRFGASSLLASLLTTLGHQSNANSSGY.

D108 (proton donor/acceptor) is an active-site residue. K173 (schiff-base intermediate with acetaldehyde) is an active-site residue. K207 serves as the catalytic Proton donor/acceptor.

It belongs to the DeoC/FbaB aldolase family. DeoC type 2 subfamily.

It localises to the cytoplasm. It carries out the reaction 2-deoxy-D-ribose 5-phosphate = D-glyceraldehyde 3-phosphate + acetaldehyde. The protein operates within carbohydrate degradation; 2-deoxy-D-ribose 1-phosphate degradation; D-glyceraldehyde 3-phosphate and acetaldehyde from 2-deoxy-alpha-D-ribose 1-phosphate: step 2/2. In terms of biological role, catalyzes a reversible aldol reaction between acetaldehyde and D-glyceraldehyde 3-phosphate to generate 2-deoxy-D-ribose 5-phosphate. This chain is Deoxyribose-phosphate aldolase 2 (deoC2), found in Yersinia pestis.